The chain runs to 424 residues: Histidine--tRNA ligase (424 aa).

The protein belongs to the class-II aminoacyl-tRNA synthetase family. In terms of assembly, homodimer.

It is found in the cytoplasm. It carries out the reaction tRNA(His) + L-histidine + ATP = L-histidyl-tRNA(His) + AMP + diphosphate + H(+). This chain is Histidine--tRNA ligase, found in Shewanella sediminis (strain HAW-EB3).